The primary structure comprises 1732 residues: MRKLLLLIAASLLGVGLYAQSAKIKLDAPTTRTTCTNNSFKQFDASFSFNEVELTKVETKGGTFASVSIPGAFPTGEVGSPEVPAVRKLIAVPVGATPVVRVKSFTEQVYSLNQYGSEKLMPHQPSMSKSDDPEKVPFVYNAAAYARKGFVGQELTQVEMLGTMRGVRIAALTINPVQYDVVANQLKVRNNIEIEVSFQGADEVATQRLYDASFSPYFETAYKQLFNRDVYTDHGDLYNTPVRMLVVAGAKFKEALKPWLTWKAQKGFYLDVHYTDEAEVGTTNASIKAFIHKKYNDGLAASAAPVFLALVGDTDVISGEKGKKTKKVTDLYYSAVDGDYFPEMYTFRMSASSPEELTNIIDKVLMYEKATMPDKSYLEKVLLIAGADYSWNSQVGQPTIKYGMQYYYNQEHGYTDVYNYLKAPYTGCYSHLNTGVSFANYTAHGSETAWADPLLTTSQLKALTNKDKYFLAIGNCCITAQFDYVQPCFGEVITRVKEKGAYAYIGSSPNSYWGEDYYWSVGANAVFGVQPTFEGTSMGSYDATFLEDSYNTVNSIMWAGNLAATHAGNIGNITHIGAHYYWEAYHVLGDGSVMPYRAMPKTNTYTLPASLPQNQASYSIQASAGSYVAISKDGVLYGTGVANASGVATVSMTKQITENGNYDVVITRSNYLPVIKQIQVGEPSPYQPVSNLTATTQGQKVTLKWEAPSAKKAEGSREVKRIGDGLFVTIEPANDVRANEAKVVLAADNVWGDNTGYQFLLDADHNTFGSVIPATGPLFTGTASSNLYSANFEYLVPANADPVVTTQNIIVTGQGEVVIPGGVYDYCITNPEPASGKMWIAGDGGNQPARYDDFTFEAGKKYTFTMRRAGMGDGTDMEVEDDSPASYTYTVYRDGTKIKEGLTATTFEEDGVAAGNHEYCVEVKYTAGVSPKVCKDVTVEGSNEFAPVQNLTGSSVGQKVTLKWDAPNGTPNPNPNPNPNPGTTLSESFENGIPASWKTIDADGDGHGWKPGNAPGIAGYNSNGCVYSESFGLGGIGVLTPDNYLITPALDLPNGGKLTFWVCAQDANYASEHYAVYASSTGNDASNFTNALLEETITAKGVRSPKAIRGRIQGTWRQKTVDLPAGTKYVAFRHFQSTDMFYIDLDEVEIKANGKRADFTETFESSTHGEAPAEWTTIDADGDGQGWLCLSSGQLDWLTAHGGSNVVSSFSWNGMALNPDNYLISKDVTGATKVKYYYAVNDGFPGDHYAVMISKTGTNAGDFTVVFEETPNGINKGGARFGLSTEANGAKPQSVWIERTVDLPAGTKYVAFRHYNCSDLNYILLDDIQFTMGGSPTPTDYTYTVYRDGTKIKEGLTETTFEEDGVATGNHEYCVEVKYTAGVSPKKCVDVTVNSTQFNPVQNLTAEQAPNSMDAILKWNAPASKRAEVLNEDFENGIPASWKTIDADGDGNNWTTTPPPGGSSFAGHNSAICVSSASHINFEGPQNPDNYLVTPELSLPGGGTLTFWVCAQDANYASEHYAVYASSTGNDASNFANALLEEVLTAKTVVTAPEAIRGTRAQGTWYQKTVQLPAGTKYVAFRHFGCTDFFWINLDDVVITSGNAPSYTYTIYRNNTQIASGVTETTYRDPDLATGFYTYGVKVVYPNGESAIETATLNITSLADVTAQKPYTLTVVGKTITVTCQGEAMIYDMNGRRLAAGRNTVVYTAQGGHYAVMVVVDGKSYVEKLAVK.

A signal peptide spans 1–24 (MRKLLLLIAASLLGVGLYAQSAKI). Residues 25–228 (KLDAPTTRTT…ETAYKQLFNR (204 aa)) constitute a propeptide that is removed on maturation. 5 residues coordinate Ca(2+): Asp313, Asp337, Asp339, Phe341, and Glu343. The active-site Proton donor is His444. Catalysis depends on Cys477, which acts as the Nucleophile. Ca(2+) is bound by residues Phe482 and Glu491. Residues 965-988 (DAPNGTPNPNPNPNPNPGTTLSES) are disordered. Positions 970-980 (TPNPNPNPNPN) are enriched in pro residues. Positions 988, 990, 1001, 1003, 1005, 1007, 1022, 1024, 1043, 1146, 1147, 1433, 1435, 1446, 1448, 1450, 1452, 1470, 1472, 1490, and 1595 each coordinate Ca(2+).

The protein belongs to the peptidase C25 family. In terms of processing, proteolytically cleaved into a catalytic subunit and three adhesins. Arg-gingipain is involved in this post-translational processing.

The protein localises to the secreted. It catalyses the reaction Endopeptidase with strict specificity for lysyl bonds.. Cysteine proteinase with a strong preference for substrates with Lys in the P1 position. Hydrolyzes bovine hemoglobin, bovine serum albumin, casein, human placental type I collagen and human IgA and IgG. Disrupts the functions of polymorphonuclear leukocytes. May act as a virulence factor in the development of peridontal disease. Involved in the coaggregation of P.gingivalis with other oral bacteria. Has hemolytic activity; this is mediated by the adhesin domains and does not require the catalytic domain. The sequence is that of Lys-gingipain W83 from Porphyromonas gingivalis (Bacteroides gingivalis).